A 247-amino-acid polypeptide reads, in one-letter code: Geranylgeranylglyceryl phosphate synthase (247 aa).

Residues Asp24 and Ser53 each coordinate Mg(2+). Residues 172–178, 203–204, and 225–226 each bind sn-glycerol 1-phosphate; these read YLEAGSG, GG, and GT.

Belongs to the GGGP/HepGP synthase family. Group II subfamily. It depends on Mg(2+) as a cofactor.

It localises to the cytoplasm. It carries out the reaction sn-glycerol 1-phosphate + (2E,6E,10E)-geranylgeranyl diphosphate = sn-3-O-(geranylgeranyl)glycerol 1-phosphate + diphosphate. It participates in membrane lipid metabolism; glycerophospholipid metabolism. Its function is as follows. Prenyltransferase that catalyzes the transfer of the geranylgeranyl moiety of geranylgeranyl diphosphate (GGPP) to the C3 hydroxyl of sn-glycerol-1-phosphate (G1P). This reaction is the first ether-bond-formation step in the biosynthesis of archaeal membrane lipids. The sequence is that of Geranylgeranylglyceryl phosphate synthase from Cenarchaeum symbiosum (strain A).